The sequence spans 413 residues: 5'-deoxyadenosine deaminase (413 aa).

His-57 and His-59 together coordinate Zn(2+). 2 residues coordinate substrate: Glu-86 and His-171. His-198 is a Zn(2+) binding site. Residues Glu-201 and Asp-286 each coordinate substrate. Asp-286 provides a ligand contact to Zn(2+).

The protein belongs to the metallo-dependent hydrolases superfamily. MTA/SAH deaminase family. Homotetramer. The cofactor is Zn(2+).

It catalyses the reaction 5'-deoxyadenosine + H2O + H(+) = 5'-deoxyinosine + NH4(+). The enzyme catalyses S-adenosyl-L-homocysteine + H2O + H(+) = S-inosyl-L-homocysteine + NH4(+). The catalysed reaction is S-methyl-5'-thioadenosine + H2O + H(+) = S-methyl-5'-thioinosine + NH4(+). It carries out the reaction adenosine + H2O + H(+) = inosine + NH4(+). The protein operates within amino-acid biosynthesis; S-adenosyl-L-methionine biosynthesis. Functionally, catalyzes the deamination of three SAM-derived enzymatic products, namely 5'-deoxyadenosine, S-adenosyl-L-homocysteine, and 5'-methylthioadenosine, to produce the inosine analogs. Can also deaminate adenosine. The preferred substrate for this enzyme is 5'-deoxyadenosine, but all these substrates are efficiently deaminated. Likely functions in a S-adenosyl-L-methionine (SAM) recycling pathway from S-adenosyl-L-homocysteine (SAH) produced from SAM-dependent methylation reactions. May also be involved in the recycling of 5'-deoxyadenosine, whereupon the 5'-deoxyribose moiety of 5'-deoxyinosine is further metabolized to deoxyhexoses used for the biosynthesis of aromatic amino acids in methanogens. The chain is 5'-deoxyadenosine deaminase from Methanothrix thermoacetophila (strain DSM 6194 / JCM 14653 / NBRC 101360 / PT) (Methanosaeta thermophila).